The following is a 90-amino-acid chain: Barrier-to-autointegration factor-like protein (90 aa).

It belongs to the BAF family. Homodimer. Heterodimerizes with BANF1.

The protein resides in the nucleus. The protein localises to the cytoplasm. Functionally, may play a role in BANF1 regulation and influence tissue-specific roles of BANF1. This chain is Barrier-to-autointegration factor-like protein (BANF2), found in Bos taurus (Bovine).